Consider the following 198-residue polypeptide: Thymidine kinase (198 aa).

ATP contacts are provided by residues 16 to 23 (GGMYSGKS) and 89 to 92 (EEGQ). The Proton acceptor role is filled by Glu-90. The Zn(2+) site is built by Cys-146, Cys-149, Cys-184, and Cys-187.

Belongs to the thymidine kinase family. In terms of assembly, homotetramer.

Its subcellular location is the cytoplasm. It carries out the reaction thymidine + ATP = dTMP + ADP + H(+). This chain is Thymidine kinase, found in Dictyoglomus thermophilum (strain ATCC 35947 / DSM 3960 / H-6-12).